The chain runs to 1770 residues: Probable outer membrane protein PmpC (1770 aa).

Positions 1 to 20 (MKFMSATAVFAAALSSVTEA) are cleaved as a signal peptide. 5 disordered regions span residues 73-109 (LPRK…ELDN), 264-311 (EDTL…GKGG), 481-505 (PAAP…TNSD), 611-818 (ESTP…STTE), and 1271-1329 (LRII…TSRT). Residues 85–97 (SPTTEGVSSSSSG) are compositionally biased toward low complexity. Over residues 268–285 (DSTPETEQTESNGNQDGS) the composition is skewed to polar residues. 2 stretches are compositionally biased toward low complexity: residues 294–303 (SESPESTPSP) and 496–505 (QTETSDTNSD). 2 stretches are compositionally biased toward polar residues: residues 631-675 (TEDP…TGNA) and 682-703 (QDST…QSNE). 2 stretches are compositionally biased toward low complexity: residues 719-748 (ESVS…GDQS) and 762-802 (STDS…GDSA). Polar residues predominate over residues 1303–1319 (NNDASNQGESANGSSSP). One can recognise an Autotransporter domain in the interval 1477-1770 (EEVSYNNLWI…MMNCGARMTF (294 aa)).

This sequence belongs to the PMP outer membrane protein family.

It localises to the secreted. The protein localises to the cell wall. Its subcellular location is the cell outer membrane. The chain is Probable outer membrane protein PmpC (pmpC) from Chlamydia trachomatis serovar D (strain ATCC VR-885 / DSM 19411 / UW-3/Cx).